A 103-amino-acid chain; its full sequence is Co-chaperonin GroES (103 aa).

It belongs to the GroES chaperonin family. In terms of assembly, heptamer of 7 subunits arranged in a ring. Interacts with the chaperonin GroEL.

The protein resides in the cytoplasm. Together with the chaperonin GroEL, plays an essential role in assisting protein folding. The GroEL-GroES system forms a nano-cage that allows encapsulation of the non-native substrate proteins and provides a physical environment optimized to promote and accelerate protein folding. GroES binds to the apical surface of the GroEL ring, thereby capping the opening of the GroEL channel. This chain is Co-chaperonin GroES, found in Prochlorococcus marinus subsp. pastoris (strain CCMP1986 / NIES-2087 / MED4).